A 277-amino-acid polypeptide reads, in one-letter code: Insertion element IS407 uncharacterized 31.7 kDa protein (277 aa).

The Integrase catalytic domain maps to 103-264 (LPGAPNEVWS…APSEFAAKHR (162 aa)).

This chain is Insertion element IS407 uncharacterized 31.7 kDa protein, found in Burkholderia multivorans (strain ATCC 17616 / 249).